The primary structure comprises 40 residues: Photosystem II reaction center protein J (40 aa).

Residues 8 to 28 form a helical membrane-spanning segment; sequence IPLWLIGTVTGILVIGLLGIF.

This sequence belongs to the PsbJ family. PSII is composed of 1 copy each of membrane proteins PsbA, PsbB, PsbC, PsbD, PsbE, PsbF, PsbH, PsbI, PsbJ, PsbK, PsbL, PsbM, PsbT, PsbX, PsbY, PsbZ, Psb30/Ycf12, at least 3 peripheral proteins of the oxygen-evolving complex and a large number of cofactors. It forms dimeric complexes.

The protein resides in the plastid. The protein localises to the chloroplast thylakoid membrane. Its function is as follows. One of the components of the core complex of photosystem II (PSII). PSII is a light-driven water:plastoquinone oxidoreductase that uses light energy to abstract electrons from H(2)O, generating O(2) and a proton gradient subsequently used for ATP formation. It consists of a core antenna complex that captures photons, and an electron transfer chain that converts photonic excitation into a charge separation. The chain is Photosystem II reaction center protein J from Angiopteris evecta (Mule's foot fern).